Reading from the N-terminus, the 345-residue chain is Phosphoribosylformylglycinamidine cyclo-ligase (345 aa).

This sequence belongs to the AIR synthase family.

The protein resides in the cytoplasm. It carries out the reaction 2-formamido-N(1)-(5-O-phospho-beta-D-ribosyl)acetamidine + ATP = 5-amino-1-(5-phospho-beta-D-ribosyl)imidazole + ADP + phosphate + H(+). The protein operates within purine metabolism; IMP biosynthesis via de novo pathway; 5-amino-1-(5-phospho-D-ribosyl)imidazole from N(2)-formyl-N(1)-(5-phospho-D-ribosyl)glycinamide: step 2/2. In Aeromonas salmonicida (strain A449), this protein is Phosphoribosylformylglycinamidine cyclo-ligase.